We begin with the raw amino-acid sequence, 448 residues long: Glucose-6-phosphate isomerase (448 aa).

Glu290 serves as the catalytic Proton donor. Residues His311 and Lys425 contribute to the active site.

This sequence belongs to the GPI family.

Its subcellular location is the cytoplasm. It catalyses the reaction alpha-D-glucose 6-phosphate = beta-D-fructose 6-phosphate. It functions in the pathway carbohydrate biosynthesis; gluconeogenesis. The protein operates within carbohydrate degradation; glycolysis; D-glyceraldehyde 3-phosphate and glycerone phosphate from D-glucose: step 2/4. Its function is as follows. Catalyzes the reversible isomerization of glucose-6-phosphate to fructose-6-phosphate. The protein is Glucose-6-phosphate isomerase of Levilactobacillus brevis (strain ATCC 367 / BCRC 12310 / CIP 105137 / JCM 1170 / LMG 11437 / NCIMB 947 / NCTC 947) (Lactobacillus brevis).